We begin with the raw amino-acid sequence, 621 residues long: F-box/LRR-repeat protein 4 (621 aa).

R28 bears the Asymmetric dimethylarginine mark. The F-box domain maps to 277–332 (NGYFDKLPYELIQLILNHLSLPDLCRLAQTCRLLHQHCCDPLQYIHLNLQPYWARL). 9 LRR repeats span residues 376–397 (ELVRLELSCSHFLNDTCLEVIS), 402–421 (NLQDLNLSSCDKLPPQAFGH), 427–448 (SLKRLVLYRTKVEQTALLSILN), 452–474 (ELQHLSLGSCVMIEDYDVIASMI), 480–501 (NLRTLDLWRCKNITENGIAELA), 504–524 (CVLLEELDLGWCPTLQSSTGC), 532–558 (LPNLQKLFLTANRSVCDTDIEELASNC), 559–583 (TRLQQLDILGTRMVSPASLRKLLES), and 584–609 (CKDLSLLDVSFCSQIDNKAVLELNAS).

Part of a SCF (SKP1-CUL1-F-box) protein ligase complex. Interacts with FAF2 and VCP. Interacts with PPTC7; this interaction promotes destruction of BNIP3 and NIX and mitophagy suppression.

It localises to the cytoplasm. It is found in the nucleus. The protein localises to the mitochondrion outer membrane. Its function is as follows. Substrate-recognition component of the mitochondria-localized SCF-FBXL4 ubiquitin E3 ligase complex that plays a role in the restriction of mitophagy by controlling the degradation of BNIP3 and NIX mitophagy receptors. Also rescues mitochondrial injury through reverting hyperactivation of DRP1-mediated mitochondrial fission. This chain is F-box/LRR-repeat protein 4 (Fbxl4), found in Mus musculus (Mouse).